We begin with the raw amino-acid sequence, 215 residues long: Histone H1.1 (215 aa).

The segment at 1–43 is disordered; the sequence is MSETVPPAPAASAAPEKPLAGKKAKKPAKAAAASKKKPAGPSV. Residue Ser-2 is modified to N-acetylserine. Phosphoserine occurs at positions 2 and 12. Lys-17 bears the N6-acetyllysine mark. Residues 20–38 show a composition bias toward basic residues; it reads AGKKAKKPAKAAAASKKKP. Residue Lys-37 is modified to N6-(beta-hydroxybutyryl)lysine. The H15 domain occupies 39–112; the sequence is AGPSVSELIV…GASGSFKLNK (74 aa). Ser-44 carries the post-translational modification Phosphoserine. Lys-55 bears the N6-(beta-hydroxybutyryl)lysine mark. Arg-57 is modified (citrulline). Lys-67 carries the N6-(beta-hydroxybutyryl)lysine modification. N6-acetyllysine is present on Lys-78. Lys-88 carries the post-translational modification N6-(beta-hydroxybutyryl)lysine. N6-(beta-hydroxybutyryl)lysine; alternate is present on Lys-93. Residue Lys-93 is modified to N6-acetyllysine; alternate. A disordered region spans residues 94–215; the sequence is GTLVQTKGTG…KPKKAAPKKK (122 aa). Ser-107 is subject to Phosphoserine. An N6-(beta-hydroxybutyryl)lysine modification is found at Lys-109. Residues 122–147 are compositionally biased toward low complexity; that stretch reads GASKVATKTKATGASKKLKKATGASK. Residue Lys-125 is modified to N6-acetyllysine. 2 stretches are compositionally biased toward basic residues: residues 148 to 181 and 188 to 215; these read KSVK…KKVA and KAVK…PKKK. Thr-204 bears the Phosphothreonine mark.

Belongs to the histone H1/H5 family. Interacts with DFFB. H1 histones are progressively phosphorylated during the cell cycle, becoming maximally phosphorylated during late G2 phase and M phase, and being dephosphorylated sharply thereafter. Post-translationally, citrullination at Arg-57 (H1R54ci) by PADI4 takes place within the DNA-binding site of H1 and results in its displacement from chromatin and global chromatin decondensation, thereby promoting pluripotency and stem cell maintenance.

It localises to the nucleus. It is found in the chromosome. In terms of biological role, histone H1 protein binds to linker DNA between nucleosomes forming the macromolecular structure known as the chromatin fiber. Histones H1 are necessary for the condensation of nucleosome chains into higher-order structured fibers. Also acts as a regulator of individual gene transcription through chromatin remodeling, nucleosome spacing and DNA methylation. This chain is Histone H1.1, found in Homo sapiens (Human).